The primary structure comprises 923 residues: Isoleucine--tRNA ligase (923 aa).

The 'HIGH' region signature appears at 57 to 67 (PYANGHIHIGH). Glutamate 560 contacts L-isoleucyl-5'-AMP. The 'KMSKS' region motif lies at 601–605 (KMSKS). An ATP-binding site is contributed by lysine 604. Residues cysteine 895, cysteine 898, cysteine 915, and cysteine 918 each coordinate Zn(2+).

It belongs to the class-I aminoacyl-tRNA synthetase family. IleS type 1 subfamily. In terms of assembly, monomer. Zn(2+) is required as a cofactor.

The protein localises to the cytoplasm. The catalysed reaction is tRNA(Ile) + L-isoleucine + ATP = L-isoleucyl-tRNA(Ile) + AMP + diphosphate. Its function is as follows. Catalyzes the attachment of isoleucine to tRNA(Ile). As IleRS can inadvertently accommodate and process structurally similar amino acids such as valine, to avoid such errors it has two additional distinct tRNA(Ile)-dependent editing activities. One activity is designated as 'pretransfer' editing and involves the hydrolysis of activated Val-AMP. The other activity is designated 'posttransfer' editing and involves deacylation of mischarged Val-tRNA(Ile). This Geobacter sulfurreducens (strain ATCC 51573 / DSM 12127 / PCA) protein is Isoleucine--tRNA ligase.